Consider the following 382-residue polypeptide: Gap junction alpha-1 protein (382 aa).

Topologically, residues 2-23 are cytoplasmic; that stretch reads GDWSALGKLLDKVQAYSTAGGK. Phosphoserine is present on S5. A helical membrane pass occupies residues 24 to 44; the sequence is VWLSVLFIFRILLLGTAVESA. At 45-76 the chain is on the extracellular side; that stretch reads WGDEQSAFRCNTQQPGCENVCYDKSFPISHVR. Cystine bridges form between C54/C192 and C187/C198. A helical transmembrane segment spans residues 77 to 97; it reads FWVLQIIFVSVPTLLYLAHVF. Topologically, residues 98–155 are cytoplasmic; it reads YVMRKEEKLNKKEEELKVAQTDGVNVEMHLKQIEIKKFKYGIEEHGKVKMRGGLLRTY. K144 participates in a covalent cross-link: Glycyl lysine isopeptide (Lys-Gly) (interchain with G-Cter in SUMO). Residues 156 to 176 form a helical membrane-spanning segment; sequence IISILFKSIFEVAFLLIQWYI. Residues 177–207 lie on the Extracellular side of the membrane; sequence YGFSLSAVYTCKRDPCPHQVDCFLSRPTEKT. Residues 208 to 228 form a helical membrane-spanning segment; the sequence is IFIIFMLVVSLVSLALNIIEL. Residues 229 to 382 lie on the Cytoplasmic side of the membrane; the sequence is FYVFFKGVKD…SRPRPDDLEI (154 aa). K237 participates in a covalent cross-link: Glycyl lysine isopeptide (Lys-Gly) (interchain with G-Cter in SUMO). The tract at residues 244–382 is interaction with NOV; the sequence is SDPYHATSGA…SRPRPDDLEI (139 aa). At Y247 the chain carries Phosphotyrosine. A phosphoserine mark is found at S255 and S262. Residues 264 to 382 are interaction with UBQLN4; that stretch reads KYAYFNGCSS…SRPRPDDLEI (119 aa). C271 is subject to S-nitrosocysteine. T275 carries the post-translational modification Phosphothreonine. The interval 279-300 is disordered; that stretch reads SPMSPPGYKPVTGDRNNSSCRN. S306 and S314 each carry phosphoserine. Polar residues predominate over residues 317–332; the sequence is QNRMGQAGSTISNSHA. Residues 317–382 are disordered; sequence QNRMGQAGST…SRPRPDDLEI (66 aa). Residue S325 is modified to Phosphoserine; by CK1. T326 carries the phosphothreonine modification. Phosphoserine; by CK1 is present on residues S328 and S330. 2 positions are modified to phosphoserine: S344 and S365. Residues 362–374 show a composition bias toward low complexity; sequence RPSSRASSRASSR. A Phosphoserine; by PKC/PRKCG and PKC/PRKCD modification is found at S368. A phosphoserine mark is found at S369 and S373.

It belongs to the connexin family. Alpha-type (group II) subfamily. A connexon is composed of a hexamer of connexins. Interacts with SGSM3. Interacts with RIC1/CIP150. Interacts with CNST and CSNK1D. Interacts (via C-terminus) with TJP1. Interacts (via C-terminus) with SRC (via SH3 domain). Interacts (not ubiquitinated) with UBQLN4 (via UBA domain). Interacts with NOV. Interacts with TMEM65. Interacts with ANK3/ANKG and PKP2. Post-translationally, phosphorylation at Ser-325, Ser-328 and Ser-330 by CK1 modulates gap junction assembly. Phosphorylated at Ser-368 by PRKCG; phosphorylation induces disassembly of gap junction plaques and inhibition of gap junction activity. Phosphorylation at Ser-368 by PRKCD triggers its internalization into small vesicles leading to proteasome-mediated degradation. In terms of processing, sumoylated with SUMO1, SUMO2 and SUMO3, which may regulate the level of functional Cx43 gap junctions at the plasma membrane. May be desumoylated by SENP1 or SENP2. S-nitrosylation at Cys-271 is enriched at the muscle endothelial gap junction in arteries, it augments channel permeability and may regulate of smooth muscle cell to endothelial cell communication. Post-translationally, acetylated in the developing cortex; leading to delocalization from the cell membrane.

The protein localises to the cell membrane. Its subcellular location is the cell junction. The protein resides in the gap junction. It localises to the endoplasmic reticulum. Functionally, gap junction protein that acts as a regulator of bladder capacity. A gap junction consists of a cluster of closely packed pairs of transmembrane channels, the connexons, through which materials of low MW diffuse from one cell to a neighboring cell. May play a critical role in the physiology of hearing by participating in the recycling of potassium to the cochlear endolymph. Negative regulator of bladder functional capacity: acts by enhancing intercellular electrical and chemical transmission, thus sensitizing bladder muscles to cholinergic neural stimuli and causing them to contract. May play a role in cell growth inhibition through the regulation of NOV expression and localization. Plays an essential role in gap junction communication in the ventricles. The protein is Gap junction alpha-1 protein (GJA1) of Macaca fascicularis (Crab-eating macaque).